The chain runs to 83 residues: Small proline-rich protein 2A3 (83 aa).

Repeat copies occupy residues P21–P29, Q30–P38, V39–P47, S48–P56, and V57–P65. The 5 X 9 AA approximate tandem repeats stretch occupies residues P21 to P65.

It belongs to the cornifin (SPRR) family. Forms five pairs of intrachain disulfide bonds.

The protein resides in the secreted. It localises to the extracellular space. The protein localises to the cytoplasmic vesicle. It is found in the secretory vesicle. Functionally, gut bactericidal protein that selectively kills Gram-positive bacteria by binding to negatively charged lipids on bacterial membranes, leading to bacterial membrane permeabilization and disruption. Specifically binds lipids bearing negatively charged headgroups, such as phosphatidic acid, phosphatidylserine (PS), cardiolipin (CL), and phosphatidylinositol phosphates, but not to zwitterionic or neutral lipids. Induced by type-2 cytokines in response to helminth infection and is required to protect against helminth-induced bacterial invasion of intestinal tissue. May also be involved in the development of the cornified envelope of squamous epithelia; however, additional evidences are required to confirm this result in vivo. This is Small proline-rich protein 2A3 from Mus musculus (Mouse).